Here is a 3255-residue protein sequence, read N- to C-terminus: Genome polyprotein (3255 aa).

Residues 292-437 form the Peptidase S30 domain; it reads VMNQQTLMAF…HSITHRMVQY (146 aa). Catalysis depends on for P1 proteinase activity residues His-345, Asp-354, and Ser-388. An Involved in interaction with stylet and aphid transmission motif is present at residues 489-492; it reads KITC. Positions 747 to 749 match the Involved in virions binding and aphid transmission motif; that stretch reads PTK. A Peptidase C6 domain is found at 773 to 895; sequence MFVTKDGYCY…ESEMQHYRVG (123 aa). Catalysis depends on for helper component proteinase activity residues Cys-781 and His-854. The 153-residue stretch at 1397 to 1549 folds into the Helicase ATP-binding domain; that stretch reads EIAHNEYRDI…PMHMVDIATE (153 aa). 1410-1417 contributes to the ATP binding site; that stretch reads GGVGSGKS. The DECH box motif lies at 1499-1502; the sequence is DECH. The Helicase C-terminal domain occupies 1568–1727; that stretch reads DATKKGDNIL…GLPVMTSNVS (160 aa). The Nuclear localization signal signature appears at 2062–2069; that stretch reads EKGKKSGK. Tyr-2084 carries the O-(5'-phospho-RNA)-tyrosine modification. In terms of domain architecture, Peptidase C4 spans 2215–2433; sequence SKTLFRGLRD…MVWGGINLIN (219 aa). Active-site for nuclear inclusion protein A activity residues include His-2260, Asp-2295, and Cys-2365. A RdRp catalytic domain is found at 2699 to 2823; it reads WVYCDADGSQ…AIKPEHESLL (125 aa). The tract at residues 2980-3028 is disordered; the sequence is AKLDAGQGSKTDDKQKNSADPKDNIITEKGSGSGQMKKDDDINAGLHGK. The segment covering 2989-3005 has biased composition (basic and acidic residues); that stretch reads KTDDKQKNSADPKDNII. At Thr-3237 the chain carries Phosphothreonine.

This sequence belongs to the potyviridae genome polyprotein family. In terms of assembly, interacts with host eIF4E protein (via cap-binding region); this interaction mediates the translation of the VPg-viral RNA conjugates. Part of a complex that comprises VPg, RNA, host EIF4E and EIF4G; this interaction mediates the translation of the VPg-viral RNA conjugates. In terms of processing, VPg is uridylylated by the polymerase and is covalently attached to the 5'-end of the genomic RNA. This uridylylated form acts as a nucleotide-peptide primer for the polymerase. Potyviral RNA is expressed as two polyproteins which undergo post-translational proteolytic processing. Genome polyprotein is processed by NIa-pro, P1 and HC-pro proteinases resulting in the production of at least ten individual proteins. P3N-PIPO polyprotein is cleaved by P1 and HC-pro proteinases resulting in the production of three individual proteins. The P1 proteinase and the HC-pro cleave only their respective C-termini autocatalytically. 6K1 is essential for proper proteolytic separation of P3 from CI.

Its subcellular location is the host cytoplasmic vesicle. It is found in the host nucleus. It localises to the virion. The catalysed reaction is RNA(n) + a ribonucleoside 5'-triphosphate = RNA(n+1) + diphosphate. The enzyme catalyses Hydrolyzes glutaminyl bonds, and activity is further restricted by preferences for the amino acids in P6 - P1' that vary with the species of potyvirus, e.g. Glu-Xaa-Xaa-Tyr-Xaa-Gln-|-(Ser or Gly) for the enzyme from tobacco etch virus. The natural substrate is the viral polyprotein, but other proteins and oligopeptides containing the appropriate consensus sequence are also cleaved.. It catalyses the reaction Hydrolyzes a Gly-|-Gly bond at its own C-terminus, commonly in the sequence -Tyr-Xaa-Val-Gly-|-Gly, in the processing of the potyviral polyprotein.. In terms of biological role, required for aphid transmission and also has proteolytic activity. Only cleaves a Gly-Gly dipeptide at its own C-terminus. Interacts with virions and aphid stylets. Acts as a suppressor of RNA-mediated gene silencing, also known as post-transcriptional gene silencing (PTGS), a mechanism of plant viral defense that limits the accumulation of viral RNAs. May have RNA-binding activity. Functionally, has helicase activity. It may be involved in replication. Its function is as follows. Indispensable for virus replication. Reduces the abundance of host transcripts related to jasmonic acid biosynthesis therefore altering the host defenses. In order to increase its own stability, decreases host protein degradation pathways. Indispensable for virus replication. In terms of biological role, mediates the cap-independent, EIF4E-dependent translation of viral genomic RNAs. Binds to the cap-binding site of host EIF4E and thus interferes with the host EIF4E-dependent mRNA export and translation. VPg-RNA directly binds EIF4E and is a template for transcription. Also forms trimeric complexes with EIF4E-EIF4G, which are templates for translation. Functionally, has RNA-binding and proteolytic activities. Its function is as follows. An RNA-dependent RNA polymerase that plays an essential role in the virus replication. Involved in aphid transmission, cell-to-cell and systemis movement, encapsidation of the viral RNA and in the regulation of viral RNA amplification. This chain is Genome polyprotein, found in Lettuce mosaic virus (strain 0 / isolate French) (LMV).